The primary structure comprises 138 residues: Small ribosomal subunit protein uS9 (138 aa).

The interval 99–138 is disordered; that stretch reads DPDNRPPLKTEGYLTRDPRAKERKKYGLHKARKAPQYSKR. Residues 100–118 are compositionally biased toward basic and acidic residues; sequence PDNRPPLKTEGYLTRDPRA. Over residues 119–138 the composition is skewed to basic residues; sequence KERKKYGLHKARKAPQYSKR.

The protein belongs to the universal ribosomal protein uS9 family.

The sequence is that of Small ribosomal subunit protein uS9 from Nostoc punctiforme (strain ATCC 29133 / PCC 73102).